The sequence spans 161 residues: Regulator of ribonuclease activity A (161 aa).

It belongs to the RraA family. As to quaternary structure, homotrimer. Binds to both RNA-binding sites in the C-terminal region of Rne and to RhlB.

It localises to the cytoplasm. Functionally, globally modulates RNA abundance by binding to RNase E (Rne) and regulating its endonucleolytic activity. Can modulate Rne action in a substrate-dependent manner by altering the composition of the degradosome. Modulates RNA-binding and helicase activities of the degradosome. This chain is Regulator of ribonuclease activity A, found in Pseudoalteromonas atlantica (strain T6c / ATCC BAA-1087).